The sequence spans 464 residues: Integrator complex subunit 12 (464 aa).

Positions 42-98 (GNDSVYRPQPKEVEQPKAMLSKVKPETKASSSTPSSSILSKPLASEKVKKEAEKRTA) are disordered. Over residues 69–84 (KASSSTPSSSILSKPL) the composition is skewed to low complexity. The segment covering 85–98 (ASEKVKKEAEKRTA) has biased composition (basic and acidic residues). The PHD-type zinc finger occupies 156-212 (GLACVVCRQMTVFSGNQLVECQECHNLYHQDCHRPQVTDKDVNDPRLVWYCARCTRQ). Disordered stretches follow at residues 216-252 (MAQK…LKSK) and 312-445 (TNSQ…SQLN). The span at 227–239 (PAPSAVSAVTPVA) shows a compositional bias: low complexity. Residues 312–329 (TNSQATSGKPPSLSSVQK) show a composition bias toward polar residues. Low complexity predominate over residues 339 to 371 (SKAGSVSKSGSGGSSSTIPLKPLPPLILGKTGL). Over residues 372 to 382 (SRSMSSDNVSK) the composition is skewed to polar residues. The segment covering 384–421 (GLPSPNPSSSGSVSSLSSQLGSNNGSSNTAGSNVNSSN) has biased composition (low complexity). The segment covering 428–445 (SMQQSGAKGPTSQESQLN) has biased composition (polar residues).

It belongs to the Integrator subunit 12 family. Component of the Integrator complex, composed of core subunits INTS1, INTS2, INTS3, INTS4, INTS5, INTS6, INTS7, INTS8, INTS9/RC74, INTS10, INTS11/CPSF3L, INTS12, INTS13, INTS14 and INTS15. The core complex associates with protein phosphatase 2A subunits PPP2CA and PPP2R1A, to form the Integrator-PP2A (INTAC) complex.

The protein localises to the nucleus. Component of the integrator complex, a multiprotein complex that terminates RNA polymerase II (Pol II) transcription in the promoter-proximal region of genes. The integrator complex provides a quality checkpoint during transcription elongation by driving premature transcription termination of transcripts that are unfavorably configured for transcriptional elongation: the complex terminates transcription by (1) catalyzing dephosphorylation of the C-terminal domain (CTD) of Pol II subunit POLR2A/RPB1 and SUPT5H/SPT5, (2) degrading the exiting nascent RNA transcript via endonuclease activity and (3) promoting the release of Pol II from bound DNA. The integrator complex is also involved in terminating the synthesis of non-coding Pol II transcripts, such as enhancer RNAs (eRNAs), small nuclear RNAs (snRNAs), telomerase RNAs and long non-coding RNAs (lncRNAs). This Xenopus laevis (African clawed frog) protein is Integrator complex subunit 12 (ints12).